We begin with the raw amino-acid sequence, 447 residues long: Phosphoglucosamine mutase (447 aa).

S100 serves as the catalytic Phosphoserine intermediate. Mg(2+) contacts are provided by S100, D240, D242, and D244. S100 carries the phosphoserine modification.

It belongs to the phosphohexose mutase family. The cofactor is Mg(2+). In terms of processing, activated by phosphorylation.

The enzyme catalyses alpha-D-glucosamine 1-phosphate = D-glucosamine 6-phosphate. Its function is as follows. Catalyzes the conversion of glucosamine-6-phosphate to glucosamine-1-phosphate. The polypeptide is Phosphoglucosamine mutase (Anoxybacillus flavithermus (strain DSM 21510 / WK1)).